Reading from the N-terminus, the 311-residue chain is Serine/threonine-protein phosphatase PP1-1 (311 aa).

Mn(2+) contacts are provided by aspartate 53, histidine 55, aspartate 82, and asparagine 114. Histidine 115 functions as the Proton donor in the catalytic mechanism. Residues histidine 164 and histidine 238 each contribute to the Mn(2+) site.

This sequence belongs to the PPP phosphatase family. PP-6 (PP-V) subfamily. In terms of assembly, inactivated in a complex with phosphatase methylesterase PPE1 (PP2Ai). Interacts with phosphatase 2A activator RRD1, which can reactivate PP2Ai by dissociating the catalytic subunit from the complex. Forms a ternary complex with RRD1-TAP42. The cofactor is Mn(2+).

Its subcellular location is the cytoplasm. It carries out the reaction O-phospho-L-seryl-[protein] + H2O = L-seryl-[protein] + phosphate. It catalyses the reaction O-phospho-L-threonyl-[protein] + H2O = L-threonyl-[protein] + phosphate. Involved in the dephosphorylation of the large subunit of RNA polymerase II. Is required in late G1 for normal G1 cyclin expression, bud initiation and expression of certain genes that are periodically expressed during late G1. Associates with the SAP proteins in a cell cycle-dependent manner. This Saccharomyces cerevisiae (strain ATCC 204508 / S288c) (Baker's yeast) protein is Serine/threonine-protein phosphatase PP1-1 (SIT4).